The chain runs to 250 residues: Pyridoxine 5'-phosphate synthase (250 aa).

3-amino-2-oxopropyl phosphate is bound at residue N11. 13-14 (DH) is a 1-deoxy-D-xylulose 5-phosphate binding site. R22 contributes to the 3-amino-2-oxopropyl phosphate binding site. H47 acts as the Proton acceptor in catalysis. 1-deoxy-D-xylulose 5-phosphate contacts are provided by R49 and H54. E74 (proton acceptor) is an active-site residue. Residue T104 participates in 1-deoxy-D-xylulose 5-phosphate binding. H198 serves as the catalytic Proton donor. 3-amino-2-oxopropyl phosphate-binding positions include G199 and 220–221 (GY).

This sequence belongs to the PNP synthase family. Homooctamer; tetramer of dimers.

The protein resides in the cytoplasm. It carries out the reaction 3-amino-2-oxopropyl phosphate + 1-deoxy-D-xylulose 5-phosphate = pyridoxine 5'-phosphate + phosphate + 2 H2O + H(+). The protein operates within cofactor biosynthesis; pyridoxine 5'-phosphate biosynthesis; pyridoxine 5'-phosphate from D-erythrose 4-phosphate: step 5/5. In terms of biological role, catalyzes the complicated ring closure reaction between the two acyclic compounds 1-deoxy-D-xylulose-5-phosphate (DXP) and 3-amino-2-oxopropyl phosphate (1-amino-acetone-3-phosphate or AAP) to form pyridoxine 5'-phosphate (PNP) and inorganic phosphate. In Bradyrhizobium diazoefficiens (strain JCM 10833 / BCRC 13528 / IAM 13628 / NBRC 14792 / USDA 110), this protein is Pyridoxine 5'-phosphate synthase.